The chain runs to 1145 residues: DNA mismatch repair protein msh-3 (1145 aa).

Disordered regions lie at residues 1 to 183 and 857 to 879; these read MAGP…GAKT and SSSA…LAQL. Positions 13-33 are enriched in polar residues; sequence ASISSFFTPRNTSPLVNLSQN. Positions 121-131 are enriched in basic and acidic residues; the sequence is AERKKKEELHR. Acidic residues predominate over residues 158 to 169; it reads GEGEEGEDDEEE. A mispair-binding domain region spans residues 183-307; that stretch reads TGKLTPMELQ…RKLTNVYTKG (125 aa). 882–889 contacts ATP; it reads GPNMGGKS. The interval 1030-1056 is disordered; it reads KSRTSMDDDAMEVDGDGDGQEGAGADK. The span at 1036–1048 shows a compositional bias: acidic residues; the sequence is DDDAMEVDGDGDG.

This sequence belongs to the DNA mismatch repair MutS family. MSH3 subfamily. Heterodimer consisting of msh-2-msh-3 (MutS beta). Forms a ternary complex with MutL alpha (mlh-1-pms-1).

The protein localises to the nucleus. Its function is as follows. Component of the post-replicative DNA mismatch repair system (MMR). Heterodimerizes with msh-2 to form MutS beta, which binds to DNA mismatches thereby initiating DNA repair. Msh-3 provides substrate-binding and substrate specificity to the complex. When bound, the MutS beta heterodimer bends the DNA helix and shields approximately 20 base pairs. Acts mainly to repair insertion-deletion loops (IDLs) from 2 to 13 nucleotides in size, but can also repair base-base and single insertion-deletion mismatches that occur during replication. After mismatch binding, forms a ternary complex with the MutL alpha heterodimer, which is thought to be responsible for directing the downstream MMR events, including strand discrimination, excision, and resynthesis. ATP binding and hydrolysis play a pivotal role in mismatch repair functions. This chain is DNA mismatch repair protein msh-3 (msh-3), found in Neurospora crassa (strain ATCC 24698 / 74-OR23-1A / CBS 708.71 / DSM 1257 / FGSC 987).